A 155-amino-acid polypeptide reads, in one-letter code: SsrA-binding protein (155 aa).

Over residues 135-147 (TIKRRDQERDIKK) the composition is skewed to basic and acidic residues. The tract at residues 135–155 (TIKRRDQERDIKKQMKHYNAR) is disordered.

Belongs to the SmpB family.

It is found in the cytoplasm. Functionally, required for rescue of stalled ribosomes mediated by trans-translation. Binds to transfer-messenger RNA (tmRNA), required for stable association of tmRNA with ribosomes. tmRNA and SmpB together mimic tRNA shape, replacing the anticodon stem-loop with SmpB. tmRNA is encoded by the ssrA gene; the 2 termini fold to resemble tRNA(Ala) and it encodes a 'tag peptide', a short internal open reading frame. During trans-translation Ala-aminoacylated tmRNA acts like a tRNA, entering the A-site of stalled ribosomes, displacing the stalled mRNA. The ribosome then switches to translate the ORF on the tmRNA; the nascent peptide is terminated with the 'tag peptide' encoded by the tmRNA and targeted for degradation. The ribosome is freed to recommence translation, which seems to be the essential function of trans-translation. The chain is SsrA-binding protein from Streptococcus pyogenes serotype M6 (strain ATCC BAA-946 / MGAS10394).